The chain runs to 236 residues: Large ribosomal subunit protein uL1 (236 aa).

The protein belongs to the universal ribosomal protein uL1 family. In terms of assembly, part of the 50S ribosomal subunit.

Functionally, binds directly to 23S rRNA. The L1 stalk is quite mobile in the ribosome, and is involved in E site tRNA release. Its function is as follows. Protein L1 is also a translational repressor protein, it controls the translation of the L11 operon by binding to its mRNA. This chain is Large ribosomal subunit protein uL1, found in Acidobacterium capsulatum (strain ATCC 51196 / DSM 11244 / BCRC 80197 / JCM 7670 / NBRC 15755 / NCIMB 13165 / 161).